Here is a 72-residue protein sequence, read N- to C-terminus: Exodeoxyribonuclease 7 small subunit (72 aa).

The protein belongs to the XseB family. As to quaternary structure, heterooligomer composed of large and small subunits.

It localises to the cytoplasm. It catalyses the reaction Exonucleolytic cleavage in either 5'- to 3'- or 3'- to 5'-direction to yield nucleoside 5'-phosphates.. Bidirectionally degrades single-stranded DNA into large acid-insoluble oligonucleotides, which are then degraded further into small acid-soluble oligonucleotides. In Chlamydia trachomatis serovar A (strain ATCC VR-571B / DSM 19440 / HAR-13), this protein is Exodeoxyribonuclease 7 small subunit.